Consider the following 187-residue polypeptide: Glutathione peroxidase 7 (187 aa).

A signal peptide spans 1–19; it reads MVAATVAAAWLLLWAAACA. The active site involves Cys57.

The protein belongs to the glutathione peroxidase family. Expressed in esophageal epithelial cells; expression is up-regulated after exposure to acidic bile acids.

The protein resides in the secreted. It carries out the reaction 2 glutathione + H2O2 = glutathione disulfide + 2 H2O. It protects esophageal epithelia from hydrogen peroxide-induced oxidative stress. It suppresses acidic bile acid-induced reactive oxygen species (ROS) and protects against oxidative DNA damage and double-strand breaks. The protein is Glutathione peroxidase 7 (GPX7) of Homo sapiens (Human).